Here is a 165-residue protein sequence, read N- to C-terminus: Nucleotide-binding protein Chy400_2003 (165 aa).

It belongs to the YajQ family.

Functionally, nucleotide-binding protein. The protein is Nucleotide-binding protein Chy400_2003 of Chloroflexus aurantiacus (strain ATCC 29364 / DSM 637 / Y-400-fl).